The sequence spans 267 residues: Small ribosomal subunit protein uS2 (267 aa).

The disordered stretch occupies residues 224-267 (GRQGEDQVDEKTFEGQKSEAAEGDKKTADNSMEDIVNAVEGDNK). The segment covering 225 to 251 (RQGEDQVDEKTFEGQKSEAAEGDKKTA) has biased composition (basic and acidic residues).

It belongs to the universal ribosomal protein uS2 family.

This is Small ribosomal subunit protein uS2 from Levilactobacillus brevis (strain ATCC 367 / BCRC 12310 / CIP 105137 / JCM 1170 / LMG 11437 / NCIMB 947 / NCTC 947) (Lactobacillus brevis).